Here is a 141-residue protein sequence, read N- to C-terminus: Small ribosomal subunit protein uS11 (141 aa).

Belongs to the universal ribosomal protein uS11 family. In terms of assembly, part of the 30S ribosomal subunit.

Functionally, located on the platform of the 30S subunit. This Pyrobaculum calidifontis (strain DSM 21063 / JCM 11548 / VA1) protein is Small ribosomal subunit protein uS11.